Reading from the N-terminus, the 396-residue chain is MSFDLRTRLDARRAAHLYRQRPLLQSPQGPQVIVDGQPLLAFCNNDYMGLANHPEVIAAWQAGAERWGVGGGASHLVIGHSAPHHELEEALAELTGRPRALLFSNGYMANLGAVTALVGQGDTVLEDRLNHASLLDAGLLSGARFSRYLHNDVSSLEARLEKSVGDTLVVTDGVFSMDGDIADLPALARSAKAKGAWLMVDDAHGFGPLGANGAGIVEHFGLSMDDVPVLVGTLGKSFGTSGAFVAGSEELIETLIQFARPYIYTTSQPPALACATLKSLQLLRTEHWRREHLTRLIQQFRRGAEQIGLQLMDSFTPIQPIMIGDAGRALHLSQLLRERGLLVTAIRPPTVPAGSARLRVTLSAAHSEADVQLLLNTLEQCYPLLDASHSSEPVHA.

R19 provides a ligand contact to substrate. Position 106 to 107 (G106 to Y107) interacts with pyridoxal 5'-phosphate. H131 contributes to the substrate binding site. The pyridoxal 5'-phosphate site is built by S176, H204, and T233. N6-(pyridoxal phosphate)lysine is present on K236. T350 contacts substrate.

This sequence belongs to the class-II pyridoxal-phosphate-dependent aminotransferase family. BioF subfamily. As to quaternary structure, homodimer. It depends on pyridoxal 5'-phosphate as a cofactor.

It catalyses the reaction 6-carboxyhexanoyl-[ACP] + L-alanine + H(+) = (8S)-8-amino-7-oxononanoate + holo-[ACP] + CO2. The protein operates within cofactor biosynthesis; biotin biosynthesis. Functionally, catalyzes the decarboxylative condensation of pimeloyl-[acyl-carrier protein] and L-alanine to produce 8-amino-7-oxononanoate (AON), [acyl-carrier protein], and carbon dioxide. The sequence is that of 8-amino-7-oxononanoate synthase from Pseudomonas syringae pv. syringae (strain B728a).